Consider the following 78-residue polypeptide: Acyl carrier protein (78 aa).

Residues 1 to 76 (MSLEDDVKLI…DVITYIKTRQ (76 aa)) enclose the Carrier domain. Ser-36 carries the O-(pantetheine 4'-phosphoryl)serine modification.

This sequence belongs to the acyl carrier protein (ACP) family. 4'-phosphopantetheine is transferred from CoA to a specific serine of apo-ACP by AcpS. This modification is essential for activity because fatty acids are bound in thioester linkage to the sulfhydryl of the prosthetic group.

Its subcellular location is the cytoplasm. The protein operates within lipid metabolism; fatty acid biosynthesis. Its function is as follows. Carrier of the growing fatty acid chain in fatty acid biosynthesis. This Chlamydia felis (strain Fe/C-56) (Chlamydophila felis) protein is Acyl carrier protein.